Consider the following 393-residue polypeptide: Nucleosome assembly protein 1-like 1 (393 aa).

Positions 1–10 (MANIDNKEQT) are enriched in basic and acidic residues. Disordered stretches follow at residues 1 to 36 (MANIDNKEQTELDQQDMEDVEDIEEEEAGEDANSKA) and 132 to 165 (ECEWKVDEEEDISGDLKDKAKLEEEKKDEEKEDP). Acidic residues-rich tracts occupy residues 11-30 (ELDQQDMEDVEDIEEEEAGE) and 132-144 (ECEWKVDEEEDIS). An NAP1L motif motif is present at residues 126-151 (YEPTEEECEWKVDEEEDISGDLKDKA). Over residues 145–165 (GDLKDKAKLEEEKKDEEKEDP) the composition is skewed to basic and acidic residues. Residues 274–280 (IKKKQKH) carry the Nuclear localization signal motif. A compositionally biased stretch (acidic residues) spans 347–378 (AIEDDDDDYDEEGEEADDEEGEEEADEDNDPD). The tract at residues 347–393 (AIEDDDDDYDEEGEEADDEEGEEEADEDNDPDYEPKKDQNPAECKQQ) is disordered. Residues 379–393 (YEPKKDQNPAECKQQ) show a composition bias toward basic and acidic residues.

Belongs to the nucleosome assembly protein (NAP) family. Forms homomultimers. Interacts with histone B4. Interacts with the B-type cyclins ccnb1 and ccnb2. Phosphorylated by cyclin B-cdc2 kinase complexes.

The protein resides in the cytoplasm. The protein localises to the nucleus. Its function is as follows. Acts as a chaperone for the linker histone to facilitate deposition of histone B4 onto linker DNA. Required for both remodeling of sperm chromatin into nucleosomes, and linker histone binding to nucleosome core dimers. Plays a role in tissue-specific gene regulation. Required for primitive hemopoiesis, acting upstream of tal1/scl. In Xenopus tropicalis (Western clawed frog), this protein is Nucleosome assembly protein 1-like 1.